The sequence spans 327 residues: Methionyl-tRNA formyltransferase (327 aa).

Residue 121 to 124 participates in (6S)-5,6,7,8-tetrahydrofolate binding; the sequence is SLLP.

This sequence belongs to the Fmt family.

The enzyme catalyses L-methionyl-tRNA(fMet) + (6R)-10-formyltetrahydrofolate = N-formyl-L-methionyl-tRNA(fMet) + (6S)-5,6,7,8-tetrahydrofolate + H(+). Attaches a formyl group to the free amino group of methionyl-tRNA(fMet). The formyl group appears to play a dual role in the initiator identity of N-formylmethionyl-tRNA by promoting its recognition by IF2 and preventing the misappropriation of this tRNA by the elongation apparatus. The protein is Methionyl-tRNA formyltransferase of Burkholderia pseudomallei (strain 668).